A 90-amino-acid polypeptide reads, in one-letter code: Acylphosphatase (90 aa).

Residues 5 to 90 form the Acylphosphatase-like domain; it reads CLKAWVTGRV…DPPPGTFELG (86 aa). Active-site residues include Arg20 and Asn38.

Belongs to the acylphosphatase family.

It catalyses the reaction an acyl phosphate + H2O = a carboxylate + phosphate + H(+). This is Acylphosphatase (acyP) from Chromohalobacter salexigens (strain ATCC BAA-138 / DSM 3043 / CIP 106854 / NCIMB 13768 / 1H11).